Here is a 426-residue protein sequence, read N- to C-terminus: Serine--tRNA ligase (426 aa).

The segment covering 41-60 has biased composition (polar residues); that stretch reads QTRTEQLQAERNARSKSIGQ. A disordered region spans residues 41 to 64; it reads QTRTEQLQAERNARSKSIGQAKQR. 233 to 235 contacts L-serine; that stretch reads TAE. 264-266 contributes to the ATP binding site; it reads RSE. Glu-287 provides a ligand contact to L-serine. Residue 351–354 participates in ATP binding; that stretch reads EISS. An L-serine-binding site is contributed by Ser-387.

It belongs to the class-II aminoacyl-tRNA synthetase family. Type-1 seryl-tRNA synthetase subfamily. In terms of assembly, homodimer. The tRNA molecule binds across the dimer.

It is found in the cytoplasm. It carries out the reaction tRNA(Ser) + L-serine + ATP = L-seryl-tRNA(Ser) + AMP + diphosphate + H(+). The enzyme catalyses tRNA(Sec) + L-serine + ATP = L-seryl-tRNA(Sec) + AMP + diphosphate + H(+). Its pathway is aminoacyl-tRNA biosynthesis; selenocysteinyl-tRNA(Sec) biosynthesis; L-seryl-tRNA(Sec) from L-serine and tRNA(Sec): step 1/1. In terms of biological role, catalyzes the attachment of serine to tRNA(Ser). Is also able to aminoacylate tRNA(Sec) with serine, to form the misacylated tRNA L-seryl-tRNA(Sec), which will be further converted into selenocysteinyl-tRNA(Sec). This chain is Serine--tRNA ligase, found in Pseudomonas fluorescens (strain ATCC BAA-477 / NRRL B-23932 / Pf-5).